The primary structure comprises 402 residues: UPF0597 protein THA_1286 (402 aa).

Belongs to the UPF0597 family.

The protein is UPF0597 protein THA_1286 of Thermosipho africanus (strain TCF52B).